A 652-amino-acid polypeptide reads, in one-letter code: DNA ligase (652 aa).

Residues 29–33, 78–79, and Glu107 each bind NAD(+); these read DSEYD and SL. The active-site N6-AMP-lysine intermediate is the Lys109. The NAD(+) site is built by Arg130, Glu164, Lys278, and Lys302. Residues Cys395, Cys398, Cys413, and Cys418 each coordinate Zn(2+). A BRCT domain is found at 577–652; sequence VADAALSGLT…VRDEAWLESL (76 aa).

It belongs to the NAD-dependent DNA ligase family. LigA subfamily. Mg(2+) is required as a cofactor. The cofactor is Mn(2+).

The catalysed reaction is NAD(+) + (deoxyribonucleotide)n-3'-hydroxyl + 5'-phospho-(deoxyribonucleotide)m = (deoxyribonucleotide)n+m + AMP + beta-nicotinamide D-nucleotide.. Functionally, DNA ligase that catalyzes the formation of phosphodiester linkages between 5'-phosphoryl and 3'-hydroxyl groups in double-stranded DNA using NAD as a coenzyme and as the energy source for the reaction. It is essential for DNA replication and repair of damaged DNA. This chain is DNA ligase, found in Streptococcus pneumoniae (strain JJA).